Consider the following 347-residue polypeptide: NADH-ubiquinone oxidoreductase chain 2 (347 aa).

11 consecutive transmembrane segments (helical) span residues 3–23 (PLIF…VMTT), 25–45 (HWVM…PILM), 59–79 (YFLT…INLV), 96–116 (IIMT…FWVP), 122–142 (VQLS…MSIL), 149–169 (INLD…GWGG), 178–198 (IMAY…VYNP), 200–220 (MALL…MMLM), 240–260 (LTTA…LSGF), 276–296 (MIMP…YMRL), and 326–346 (LSPL…LALL).

It belongs to the complex I subunit 2 family. As to quaternary structure, core subunit of respiratory chain NADH dehydrogenase (Complex I) which is composed of 45 different subunits. Interacts with TMEM242.

Its subcellular location is the mitochondrion inner membrane. The enzyme catalyses a ubiquinone + NADH + 5 H(+)(in) = a ubiquinol + NAD(+) + 4 H(+)(out). In terms of biological role, core subunit of the mitochondrial membrane respiratory chain NADH dehydrogenase (Complex I) which catalyzes electron transfer from NADH through the respiratory chain, using ubiquinone as an electron acceptor. Essential for the catalytic activity and assembly of complex I. This Nyctimene albiventer (Common tube-nosed fruit bat) protein is NADH-ubiquinone oxidoreductase chain 2.